Consider the following 225-residue polypeptide: Uridylate kinase (225 aa).

An ATP-binding site is contributed by 9-10 (GS). Position 46 (G46) interacts with UMP. ATP is bound by residues G47 and R51. UMP is bound by residues D67 and 115 to 121 (THPAHTT). 4 residues coordinate ATP: T141, N142, Y147, and D150.

The protein belongs to the UMP kinase family. Homohexamer.

It localises to the cytoplasm. It carries out the reaction UMP + ATP = UDP + ADP. It participates in pyrimidine metabolism; CTP biosynthesis via de novo pathway; UDP from UMP (UMPK route): step 1/1. Inhibited by UTP. In terms of biological role, catalyzes the reversible phosphorylation of UMP to UDP. This is Uridylate kinase from Methanococcus maripaludis (strain C5 / ATCC BAA-1333).